The primary structure comprises 493 residues: Cyclin-dependent kinase-like 2 (493 aa).

The 284-residue stretch at 4-287 folds into the Protein kinase domain; that stretch reads YENLGLVGEG…CAELLHHDFF (284 aa). ATP is bound by residues 10 to 18 and Lys33; that span reads VGEGSYGMV. Positions 45-51 match the [NKR]KIAxRE motif; sequence KKIAMRE. Catalysis depends on Asp126, which acts as the Proton acceptor. Disordered regions lie at residues 311 to 338 and 363 to 384; these read VSLS…KTLV and GEKA…SRTS. Basic and acidic residues predominate over residues 320–336; sequence RKKEKEKDDSLGEERKT.

It belongs to the protein kinase superfamily. CMGC Ser/Thr protein kinase family. CDC2/CDKX subfamily.

Its subcellular location is the cytoplasm. It localises to the nucleus. The enzyme catalyses L-seryl-[protein] + ATP = O-phospho-L-seryl-[protein] + ADP + H(+). It catalyses the reaction L-threonyl-[protein] + ATP = O-phospho-L-threonyl-[protein] + ADP + H(+). This is Cyclin-dependent kinase-like 2 from Pongo abelii (Sumatran orangutan).